We begin with the raw amino-acid sequence, 206 residues long: Ras-related protein Ral-B (206 aa).

GTP is bound at residue 21–29 (GSGGVGKSA). The Effector region signature appears at 43-51 (YEPTKADSY). Residues 68-72 (DTAGQ), 128-131 (NKSD), and 158-160 (SAK) contribute to the GTP site. Positions 180–189 (KMSENKDKNG) are enriched in basic and acidic residues. Positions 180 to 206 (KMSENKDKNGKKSSKNKKSFKERCCLL) are disordered. Cysteine 203 is subject to Cysteine methyl ester. Residue cysteine 203 is the site of S-geranylgeranyl cysteine attachment. A propeptide spans 204-206 (CLL) (removed in mature form).

Belongs to the small GTPase superfamily. Ras family. As to quaternary structure, interacts with EXOC2/Sec5 and EXOC8/Exo84. Interacts (via effector domain) with RALBP1. Prenylation is essential for membrane localization. In terms of processing, the farnesylated form confers resistance to the proapoptotic and anti-anchorage-dependent growth effects of some geranylgeranyltransferase I inhibitors.

It localises to the cell membrane. The protein resides in the midbody. The catalysed reaction is GTP + H2O = GDP + phosphate + H(+). Alternates between an inactive form bound to GDP and an active form bound to GTP. Activated by a guanine nucleotide-exchange factor (GEF) and inactivated by a GTPase-activating protein (GAP). Functionally, multifunctional GTPase involved in a variety of cellular processes including gene expression, cell migration, cell proliferation, oncogenic transformation and membrane trafficking. Accomplishes its multiple functions by interacting with distinct downstream effectors. Acts as a GTP sensor for GTP-dependent exocytosis of dense core vesicles. Required both to stabilize the assembly of the exocyst complex and to localize functional exocyst complexes to the leading edge of migrating cells. Required for suppression of apoptosis. In late stages of cytokinesis, upon completion of the bridge formation between dividing cells, mediates exocyst recruitment to the midbody to drive abscission. Involved in ligand-dependent receptor mediated endocytosis of the EGF and insulin receptors. This Pongo abelii (Sumatran orangutan) protein is Ras-related protein Ral-B (RALB).